The following is a 416-amino-acid chain: Formyl-CoA:oxalate CoA-transferase (416 aa).

Residues 17-18 (QS), Arg-38, 72-75 (LNTK), 96-98 (NFH), His-104, and 137-140 (KAYE) each bind CoA. Asp-169 functions as the Nucleophile in the catalytic mechanism. Residue 248-250 (GGQ) coordinates substrate. Residue 273–275 (QEQ) participates in CoA binding.

The protein belongs to the CoA-transferase III family. Frc subfamily. Homodimer.

It catalyses the reaction formyl-CoA + oxalate = oxalyl-CoA + formate. Its pathway is metabolic intermediate degradation; oxalate degradation; CO(2) and formate from oxalate: step 1/2. In terms of biological role, involved in the catabolism of oxalate and in the adapatation to low pH via the induction of the oxalate-dependent acid tolerance response (ATR). Catalyzes the transfer of the CoA moiety from formyl-CoA to oxalate. The protein is Formyl-CoA:oxalate CoA-transferase of Escherichia coli O6:H1 (strain CFT073 / ATCC 700928 / UPEC).